Here is a 424-residue protein sequence, read N- to C-terminus: Serine--tRNA ligase (424 aa).

229-231 (TAE) is an L-serine binding site. 260–262 (RRE) serves as a coordination point for ATP. L-serine is bound at residue glutamate 283. Residue 347–350 (EVSS) coordinates ATP. Residue serine 383 participates in L-serine binding.

This sequence belongs to the class-II aminoacyl-tRNA synthetase family. Type-1 seryl-tRNA synthetase subfamily. In terms of assembly, homodimer. The tRNA molecule binds across the dimer.

The protein resides in the cytoplasm. The enzyme catalyses tRNA(Ser) + L-serine + ATP = L-seryl-tRNA(Ser) + AMP + diphosphate + H(+). It catalyses the reaction tRNA(Sec) + L-serine + ATP = L-seryl-tRNA(Sec) + AMP + diphosphate + H(+). It functions in the pathway aminoacyl-tRNA biosynthesis; selenocysteinyl-tRNA(Sec) biosynthesis; L-seryl-tRNA(Sec) from L-serine and tRNA(Sec): step 1/1. Catalyzes the attachment of serine to tRNA(Ser). Is also able to aminoacylate tRNA(Sec) with serine, to form the misacylated tRNA L-seryl-tRNA(Sec), which will be further converted into selenocysteinyl-tRNA(Sec). The sequence is that of Serine--tRNA ligase from Roseiflexus sp. (strain RS-1).